A 418-amino-acid chain; its full sequence is Tyrosine--tRNA ligase (418 aa).

Tyr34 lines the L-tyrosine pocket. A 'HIGH' region motif is present at residues 39–48 (PTADSLHLGH). Residues Tyr169 and Gln173 each contribute to the L-tyrosine site. The 'KMSKS' region signature appears at 229–233 (KFGKS). Position 232 (Lys232) interacts with ATP. The 67-residue stretch at 352-418 (HNIVEILVAA…GKKKYAVLTY (67 aa)) folds into the S4 RNA-binding domain.

It belongs to the class-I aminoacyl-tRNA synthetase family. TyrS type 1 subfamily. Homodimer.

The protein localises to the cytoplasm. It catalyses the reaction tRNA(Tyr) + L-tyrosine + ATP = L-tyrosyl-tRNA(Tyr) + AMP + diphosphate + H(+). In terms of biological role, catalyzes the attachment of tyrosine to tRNA(Tyr) in a two-step reaction: tyrosine is first activated by ATP to form Tyr-AMP and then transferred to the acceptor end of tRNA(Tyr). This chain is Tyrosine--tRNA ligase, found in Streptococcus pyogenes serotype M49 (strain NZ131).